Here is a 193-residue protein sequence, read N- to C-terminus: MKLKPPMTMMDFFLKSEGTWFSQRTVHHFDSAQDESGKSNILVKVLTKDDPKVIKVCEQQKVNPALAKGGASFNWQDNLDHGEPNPNYSAILVDIPDSQTGRTGKFLRNRGYIESIPVVSRYHFTNDGVLTIDTEYEKNQGQERCWFLTDDFRVRINTVRMMNGVNLMAYCSERRCITRKQLEEIVQKNAARS.

The protein belongs to the CpcS/CpeS biliprotein lyase family.

In terms of biological role, covalently attaches a chromophore to Cys residue(s) of phycobiliproteins. This is Chromophore lyase CpcS/CpeS 4 from Trichodesmium erythraeum (strain IMS101).